The following is a 264-amino-acid chain: Thymidylate synthase (264 aa).

Position 21 (Arg-21) interacts with dUMP. His-51 serves as a coordination point for (6R)-5,10-methylene-5,6,7,8-tetrahydrofolate. DUMP is bound at residue 126 to 127 (RR). Cys-146 functions as the Nucleophile in the catalytic mechanism. Residues 166 to 169 (RSAD), Asn-177, and 207 to 209 (HIY) contribute to the dUMP site. Asp-169 lines the (6R)-5,10-methylene-5,6,7,8-tetrahydrofolate pocket. Position 263 (Ala-263) interacts with (6R)-5,10-methylene-5,6,7,8-tetrahydrofolate.

This sequence belongs to the thymidylate synthase family. Bacterial-type ThyA subfamily. As to quaternary structure, homodimer.

The protein localises to the cytoplasm. The catalysed reaction is dUMP + (6R)-5,10-methylene-5,6,7,8-tetrahydrofolate = 7,8-dihydrofolate + dTMP. Its pathway is pyrimidine metabolism; dTTP biosynthesis. Functionally, catalyzes the reductive methylation of 2'-deoxyuridine-5'-monophosphate (dUMP) to 2'-deoxythymidine-5'-monophosphate (dTMP) while utilizing 5,10-methylenetetrahydrofolate (mTHF) as the methyl donor and reductant in the reaction, yielding dihydrofolate (DHF) as a by-product. This enzymatic reaction provides an intracellular de novo source of dTMP, an essential precursor for DNA biosynthesis. The polypeptide is Thymidylate synthase (Agrobacterium fabrum (strain C58 / ATCC 33970) (Agrobacterium tumefaciens (strain C58))).